The sequence spans 300 residues: GTPase Era (300 aa).

Positions 8–176 (RCGYVAIVGR…EAQIAKHLPE (169 aa)) constitute an Era-type G domain. The segment at 16-23 (GRPNVGKS) is G1. Residue 16–23 (GRPNVGKS) coordinates GTP. A G2 region spans residues 42-46 (QTTRH). The tract at residues 63–66 (DTPG) is G3. GTP is bound by residues 63–67 (DTPGM) and 125–128 (NKTD). Positions 125–128 (NKTD) are G4. The interval 155–157 (ISA) is G5. Residues 199–283 (VREKIMRQLG…MLNLWVKVKG (85 aa)) enclose the KH type-2 domain.

Belongs to the TRAFAC class TrmE-Era-EngA-EngB-Septin-like GTPase superfamily. Era GTPase family. In terms of assembly, monomer.

The protein resides in the cytoplasm. Its subcellular location is the cell inner membrane. An essential GTPase that binds both GDP and GTP, with rapid nucleotide exchange. Plays a role in 16S rRNA processing and 30S ribosomal subunit biogenesis and possibly also in cell cycle regulation and energy metabolism. This Pseudomonas entomophila (strain L48) protein is GTPase Era.